The sequence spans 344 residues: Protein-glutamate methylesterase/protein-glutamine glutaminase 1 (344 aa).

Residues 5-122 (RVLVVDDSAT…GTQEALAEIV (118 aa)) form the Response regulatory domain. Asp56 is modified (4-aspartylphosphate). One can recognise a CheB-type methylesterase domain in the interval 151–343 (FMPSGDIVAI…QSILDLASAR (193 aa)). Active-site residues include Ser163, His189, and Asp285.

The protein belongs to the CheB family. In terms of processing, phosphorylated by CheA. Phosphorylation of the N-terminal regulatory domain activates the methylesterase activity.

The protein localises to the cytoplasm. The enzyme catalyses [protein]-L-glutamate 5-O-methyl ester + H2O = L-glutamyl-[protein] + methanol + H(+). It catalyses the reaction L-glutaminyl-[protein] + H2O = L-glutamyl-[protein] + NH4(+). Functionally, involved in chemotaxis. Part of a chemotaxis signal transduction system that modulates chemotaxis in response to various stimuli. Catalyzes the demethylation of specific methylglutamate residues introduced into the chemoreceptors (methyl-accepting chemotaxis proteins or MCP) by CheR. Also mediates the irreversible deamidation of specific glutamine residues to glutamic acid. The sequence is that of Protein-glutamate methylesterase/protein-glutamine glutaminase 1 from Caulobacter vibrioides (strain ATCC 19089 / CIP 103742 / CB 15) (Caulobacter crescentus).